A 273-amino-acid polypeptide reads, in one-letter code: Ribosomal RNA small subunit methyltransferase A (273 aa).

Residues asparagine 18, leucine 20, glycine 45, glutamate 66, aspartate 91, and asparagine 113 each coordinate S-adenosyl-L-methionine.

This sequence belongs to the class I-like SAM-binding methyltransferase superfamily. rRNA adenine N(6)-methyltransferase family. RsmA subfamily.

The protein resides in the cytoplasm. The catalysed reaction is adenosine(1518)/adenosine(1519) in 16S rRNA + 4 S-adenosyl-L-methionine = N(6)-dimethyladenosine(1518)/N(6)-dimethyladenosine(1519) in 16S rRNA + 4 S-adenosyl-L-homocysteine + 4 H(+). In terms of biological role, specifically dimethylates two adjacent adenosines (A1518 and A1519) in the loop of a conserved hairpin near the 3'-end of 16S rRNA in the 30S particle. May play a critical role in biogenesis of 30S subunits. This chain is Ribosomal RNA small subunit methyltransferase A, found in Escherichia coli (strain 55989 / EAEC).